A 427-amino-acid polypeptide reads, in one-letter code: Trigger factor (427 aa).

Positions 163–248 constitute a PPIase FKBP-type domain; it reads GDTVVIDFVG…IHEVKTKEVP (86 aa).

Belongs to the FKBP-type PPIase family. Tig subfamily.

It is found in the cytoplasm. The catalysed reaction is [protein]-peptidylproline (omega=180) = [protein]-peptidylproline (omega=0). Its function is as follows. Involved in protein export. Acts as a chaperone by maintaining the newly synthesized protein in an open conformation. Functions as a peptidyl-prolyl cis-trans isomerase. This chain is Trigger factor, found in Streptococcus agalactiae serotype Ia (strain ATCC 27591 / A909 / CDC SS700).